A 341-amino-acid polypeptide reads, in one-letter code: NADH-quinone oxidoreductase subunit H 1 (341 aa).

A run of 8 helical transmembrane segments spans residues 13-33 (LVVIGQSVLLLVILLIAIAYI), 82-102 (GLFLLAPLVTCVLALAAWAVI), 115-135 (VGVLYILAVSSLSVYGIIMAG), 161-181 (IGFVVICVLLCVGSLNLTAIV), 190-210 (MLGWYWLPLFPMFVVFYVSAL), 248-268 (YVAIVTMCAMGTILFLGGWLP), 277-297 (WVPGIVWFSLKLLFMFFLFAM), and 313-333 (LGWKVFLPLSLAMVVIVASVL).

This sequence belongs to the complex I subunit 1 family. NDH-1 is composed of 14 different subunits. Subunits NuoA, H, J, K, L, M, N constitute the membrane sector of the complex.

The protein resides in the cell inner membrane. The enzyme catalyses a quinone + NADH + 5 H(+)(in) = a quinol + NAD(+) + 4 H(+)(out). Its function is as follows. NDH-1 shuttles electrons from NADH, via FMN and iron-sulfur (Fe-S) centers, to quinones in the respiratory chain. The immediate electron acceptor for the enzyme in this species is believed to be ubiquinone. Couples the redox reaction to proton translocation (for every two electrons transferred, four hydrogen ions are translocated across the cytoplasmic membrane), and thus conserves the redox energy in a proton gradient. This subunit may bind ubiquinone. The polypeptide is NADH-quinone oxidoreductase subunit H 1 (Rhodopseudomonas palustris (strain ATCC BAA-98 / CGA009)).